The chain runs to 234 residues: Phosphoribosylaminoimidazole-succinocarboxamide synthase (234 aa).

It belongs to the SAICAR synthetase family.

It catalyses the reaction 5-amino-1-(5-phospho-D-ribosyl)imidazole-4-carboxylate + L-aspartate + ATP = (2S)-2-[5-amino-1-(5-phospho-beta-D-ribosyl)imidazole-4-carboxamido]succinate + ADP + phosphate + 2 H(+). Its pathway is purine metabolism; IMP biosynthesis via de novo pathway; 5-amino-1-(5-phospho-D-ribosyl)imidazole-4-carboxamide from 5-amino-1-(5-phospho-D-ribosyl)imidazole-4-carboxylate: step 1/2. The chain is Phosphoribosylaminoimidazole-succinocarboxamide synthase from Streptococcus pyogenes serotype M3 (strain ATCC BAA-595 / MGAS315).